The following is a 247-amino-acid chain: uncharacterized protein (247 aa).

The next 3 helical transmembrane spans lie at 108–128, 136–156, and 194–214; these read WYINFIPMFVYGCLDEAFLII, IFSVYNGMSMLASAAVANIIC, and GAKLSGLWMGLTLGMLPLFFI.

It localises to the membrane. This is an uncharacterized protein from Caenorhabditis elegans.